Reading from the N-terminus, the 516-residue chain is Myocyte-specific enhancer factor 2A homolog (516 aa).

The interval 1-100 is interaction with hdac9; that stretch reads MGRKKIQITR…KGLNGCESPD (100 aa). An MADS-box domain is found at 3 to 57; the sequence is RKKIQITRIMDERNRQVTFTKRKFGLMKKAYELSVLCDCEIALIIFNSSNKLFQY. Residues 58–86 constitute a DNA-binding region (mef2-type); that stretch reads ASTDMDKVLLKYTEYNEPHESRTNSDIVE. The tract at residues 318–339 is disordered; it reads PSSKGMMPPLNTQRVTSSQGTQ. Over residues 327–339 the composition is skewed to polar residues; it reads LNTQRVTSSQGTQ. Thr-343 is subject to Phosphothreonine; by NLK. Position 386 is a phosphoserine; by NLK (Ser-386). The span at 420–433 shows a compositional bias: polar residues; the sequence is GSNLSINTNQNINI. Residues 420–516 are disordered; it reads GSNLSINTNQ…KRMRMDAWVT (97 aa). Over residues 465–475 the composition is skewed to low complexity; that stretch reads DSLSSSSSSYD. 2 stretches are compositionally biased toward basic and acidic residues: residues 476–486 and 497–516; these read GSDREDVRNDF and NNEDRDSPSVKRMRMDAWVT.

The protein belongs to the MEF2 family. In terms of assembly, interacts with hdac9 and nlk2. Restricted to the somitic mesoderm of early embryos. Expressed in the head region of neurula stage embryos and in body muscle (myotomes) of the tadpole. Expressed in all tissues examined in the adult.

It localises to the nucleus. In terms of biological role, may regulate muscle-specific transcription in the embryo and may regulate transcription of a variety of cell types in the adult. Binds to the sequence 5'-CTA[TA]4TAR-3'. Acts downstream of nlk2 in anterior neural development, including eye formation. This is Myocyte-specific enhancer factor 2A homolog (mef2a) from Xenopus laevis (African clawed frog).